A 460-amino-acid polypeptide reads, in one-letter code: Flavin-containing monooxygenase FMO GS-OX-like 9 (460 aa).

20 to 25 (GAGPAG) is a binding site for FAD. 222–227 (GNSMSG) serves as a coordination point for NADP(+).

The protein belongs to the FMO family. The cofactor is FAD.

Catalyzes the conversion of methylthioalkyl glucosinolates of any chain length into methylsulfinylalkyl glucosinolates. The protein is Flavin-containing monooxygenase FMO GS-OX-like 9 of Arabidopsis thaliana (Mouse-ear cress).